The chain runs to 166 residues: Large ribosomal subunit protein uL10 (166 aa).

Belongs to the universal ribosomal protein uL10 family. As to quaternary structure, part of the ribosomal stalk of the 50S ribosomal subunit. The N-terminus interacts with L11 and the large rRNA to form the base of the stalk. The C-terminus forms an elongated spine to which L12 dimers bind in a sequential fashion forming a multimeric L10(L12)X complex.

Its function is as follows. Forms part of the ribosomal stalk, playing a central role in the interaction of the ribosome with GTP-bound translation factors. This chain is Large ribosomal subunit protein uL10, found in Bacillus pumilus (strain SAFR-032).